A 997-amino-acid polypeptide reads, in one-letter code: LPS-assembly protein LptD (997 aa).

Positions 1 to 27 (MLYSPLYQSIRLILFGALGLSSLTVSA) are cleaved as a signal peptide.

This sequence belongs to the LptD family. As to quaternary structure, component of the lipopolysaccharide transport and assembly complex. Interacts with LptE and LptA.

It localises to the cell outer membrane. In terms of biological role, together with LptE, is involved in the assembly of lipopolysaccharide (LPS) at the surface of the outer membrane. The polypeptide is LPS-assembly protein LptD (Psychrobacter cryohalolentis (strain ATCC BAA-1226 / DSM 17306 / VKM B-2378 / K5)).